The following is a 929-amino-acid chain: von Willebrand factor C and EGF domain-containing protein (929 aa).

Residues 1–21 (MWARLLLHVAYILIPLLGSSA) form the signal peptide. Positions 70–98 (LCSFGCGSGICIAPNVCSCQDGEQGATCP) constitute an EGF-like 1 domain. Residues 142-180 (DIDECLSSSCEGHCVNTEGGFVCECGPGMQLSADRHSCQ) form the EGF-like 2; calcium-binding domain. Cystine bridges form between Cys146–Cys155, Cys151–Cys164, Cys166–Cys179, Cys185–Cys194, Cys190–Cys203, Cys205–Cys218, Cys224–Cys237, Cys233–Cys246, and Cys248–Cys261. The EGF-like 3; calcium-binding domain maps to 181–219 (DTDECLGTPCQQRCKNSIGSYKCSCRAGFHLHGNRHSCI). The 43-residue stretch at 220–262 (DVNECRRPQERRVCHHTCHNTVGSFLCTCRPGFRLRSDRVSCE) folds into the EGF-like 4; calcium-binding domain. 2 disordered regions span residues 291 to 317 (AGRP…RTIS) and 339 to 374 (PSSS…LGAG). The span at 339-353 (PSSSPLGTLGPPSLL) shows a compositional bias: low complexity. 6 VWFC domains span residues 376–433 (SSCW…PSCT), 433–494 (TGCF…GRCY), 491–552 (GRCY…FTCR), 558–618 (TGCS…PDCS), 619–677 (AGCT…PVCH), and 677–762 (HDCN…VNCS). N-linked (GlcNAc...) asparagine glycans are attached at residues Asn454 and Asn464. Residues 731 to 774 (PLEEKQQPSPHGELAKAARNARGDTEVPVNCSSCPGPPSASPTR) form a disordered region. Residues 743–755 (ELAKAARNARGDT) show a composition bias toward basic and acidic residues. Residue Asn787 is glycosylated (N-linked (GlcNAc...) asparagine). Residues 791 to 807 (IQSASPSPPIAQTSSSP) are compositionally biased toward polar residues. Disordered stretches follow at residues 791 to 861 (IQSA…SSTF) and 879 to 929 (AETP…NSTI). The segment covering 889–903 (LSETLTTSSSSQRLS) has biased composition (low complexity).

It localises to the secreted. May be a regulatory element in the beta-catenin signaling pathway and a target for chemoprevention of hapatocellular carcinoma. This chain is von Willebrand factor C and EGF domain-containing protein (Vwce), found in Mus musculus (Mouse).